Here is a 504-residue protein sequence, read N- to C-terminus: MEEFQVYLELNRSRRHDFLYPLIFREYIYALAHDHGLNKSMIFFENQGYGNKFSSLIVKRLIIRMDQQNHLIISANDSNQNPFFGHNNNLYSQMISAGFAVIVEIPFSLRLVSYSQGEEVAKSHNLQSIHSIFPFLEDKFSHLNYVLDVLIPHPIHLEILVQALRYWVKDASSLHLLRFSLYEYCNLKSFITPKKSISIFNPRLFLFLYNSHACEYESIFLFLRNQSSHLRSTSSGAFLERIYFYGKIEYLVEVFYNDFQNNLWLFKDPFIHFIRYQGKAILASKDTSLLMNKWKYYFVDLWQYYFYMWSQSGRVRINQLSKYSLDFLGYLSSVRLNPSVVRSQMLENSFIIDNAMKKLDTRIPIISLIGSLSKAKFCNTLGHPISKPTWADSSDSDIIDRFVRICRNLSHYHSGSSKKKSLYQIKYILRFSCVKTLARKHKSTVRAFLKRLGSEFLEEFFTETEEEHVFSLIFPRVFFTSRKLYRGRIWYLDIICINALVNHE.

It belongs to the intron maturase 2 family. MatK subfamily.

It is found in the plastid. It localises to the chloroplast. Its function is as follows. Usually encoded in the trnK tRNA gene intron. Probably assists in splicing its own and other chloroplast group II introns. The sequence is that of Maturase K from Ochroma pyramidale (Balsa).